The following is a 973-amino-acid chain: Translation initiation factor IF-2 (973 aa).

Residues 97 to 135 are compositionally biased toward basic and acidic residues; that stretch reads GHIDLDGGQHKKQQEEPKAKEEPKVKEEPKVKEEPKVKE. 2 disordered regions span residues 97–343 and 353–372; these read GHID…EDVQ and LTNK…DKRD. The segment covering 136 to 155 has biased composition (low complexity); it reads APAAPAAQAPVKPAQPAQAP. Basic and acidic residues-rich tracts occupy residues 156–175, 183–204, 212–224, and 237–250; these read TEKK…KTVE, PKVE…DDNL, LESK…KIDL, and TKEE…EKQK. The span at 252-266 shows a compositional bias: low complexity; that stretch reads NNNRPGNNSNGPGAP. Composition is skewed to basic and acidic residues over residues 315–326 and 333–343; these read PNRDDRPNNDRK and VKAEVSEEDVQ. Residues 472 to 642 form the tr-type G domain; the sequence is ARPPIVTVMG…LLEADLLDLK (171 aa). Residues 481 to 488 are G1; that stretch reads GHVDHGKT. Residue 481–488 coordinates GTP; sequence GHVDHGKT. The tract at residues 506–510 is G2; that stretch reads GITQH. Residues 528-531 are G3; that stretch reads DTPG. Residues 528-532 and 582-585 contribute to the GTP site; these read DTPGH and NKID. The segment at 582 to 585 is G4; sequence NKID. A G5 region spans residues 618-620; that stretch reads SAK.

The protein belongs to the TRAFAC class translation factor GTPase superfamily. Classic translation factor GTPase family. IF-2 subfamily.

Its subcellular location is the cytoplasm. Its function is as follows. One of the essential components for the initiation of protein synthesis. Protects formylmethionyl-tRNA from spontaneous hydrolysis and promotes its binding to the 30S ribosomal subunits. Also involved in the hydrolysis of GTP during the formation of the 70S ribosomal complex. The protein is Translation initiation factor IF-2 of Parabacteroides distasonis (strain ATCC 8503 / DSM 20701 / CIP 104284 / JCM 5825 / NCTC 11152).